A 266-amino-acid polypeptide reads, in one-letter code: Undecaprenyl-diphosphatase (266 aa).

The next 8 membrane-spanning stretches (helical) occupy residues 1–21, 39–59, 87–107, 111–131, 150–172, 187–207, 218–238, and 244–264; these read MTLT…FLPI, QGLA…MIYF, WWVI…KAFI, ARSA…LWYA, LIVG…ITMT, FSFL…TLDL, ALIV…YLFL, and IGML…LLFV.

This sequence belongs to the UppP family.

The protein localises to the cell inner membrane. It carries out the reaction di-trans,octa-cis-undecaprenyl diphosphate + H2O = di-trans,octa-cis-undecaprenyl phosphate + phosphate + H(+). Its function is as follows. Catalyzes the dephosphorylation of undecaprenyl diphosphate (UPP). Confers resistance to bacitracin. The sequence is that of Undecaprenyl-diphosphatase from Pseudoalteromonas atlantica (strain T6c / ATCC BAA-1087).